The chain runs to 195 residues: Probable DNA-directed RNA polymerase subunit delta (195 aa).

An HTH HARE-type domain is found at 14-83; the sequence is LSMIEVARAI…GDNKWGLRSW (70 aa). Acidic residues-rich tracts occupy residues 119 to 138 and 145 to 195; these read GDED…DSYE and YDDE…GEEE. The interval 119 to 195 is disordered; it reads GDEDAIDYSD…SDDDAEGEEE (77 aa).

It belongs to the RpoE family. In terms of assembly, RNAP is composed of a core of 2 alpha, a beta and a beta' subunits. The core is associated with a delta subunit and one of several sigma factors.

Its function is as follows. Participates in both the initiation and recycling phases of transcription. In the presence of the delta subunit, RNAP displays an increased specificity of transcription, a decreased affinity for nucleic acids, and an increased efficiency of RNA synthesis because of enhanced recycling. This chain is Probable DNA-directed RNA polymerase subunit delta, found in Streptococcus gordonii (strain Challis / ATCC 35105 / BCRC 15272 / CH1 / DL1 / V288).